We begin with the raw amino-acid sequence, 434 residues long: D-amino acid dehydrogenase (434 aa).

An FAD-binding site is contributed by 3-17; the sequence is VIVLGSGVIGTTTAY.

It belongs to the DadA oxidoreductase family. FAD serves as cofactor.

The catalysed reaction is a D-alpha-amino acid + A + H2O = a 2-oxocarboxylate + AH2 + NH4(+). Functionally, oxidative deamination of D-amino acids. The protein is D-amino acid dehydrogenase of Bordetella bronchiseptica (strain ATCC BAA-588 / NCTC 13252 / RB50) (Alcaligenes bronchisepticus).